Here is a 327-residue protein sequence, read N- to C-terminus: uncharacterized protein (327 aa).

Residues 1-23 (MGGGRLPPLWLPLLIAWSEWGNC) form the signal peptide. N-linked (GlcNAc...) asparagine; by host glycans are attached at residues asparagine 144 and asparagine 239. Residues 298–327 (EESEAAEETAAGEASAVAAAAVSEEEQRRE) form a disordered region. Residues 305–319 (ETAAGEASAVAAAAV) are compositionally biased toward low complexity.

This is an uncharacterized protein from Human cytomegalovirus (strain AD169) (HHV-5).